Consider the following 507-residue polypeptide: ATP synthase subunit alpha (507 aa).

169–176 lines the ATP pocket; that stretch reads GDRQTGKT.

It belongs to the ATPase alpha/beta chains family. F-type ATPases have 2 components, CF(1) - the catalytic core - and CF(0) - the membrane proton channel. CF(1) has five subunits: alpha(3), beta(3), gamma(1), delta(1), epsilon(1). CF(0) has three main subunits: a(1), b(2) and c(9-12). The alpha and beta chains form an alternating ring which encloses part of the gamma chain. CF(1) is attached to CF(0) by a central stalk formed by the gamma and epsilon chains, while a peripheral stalk is formed by the delta and b chains.

Its subcellular location is the cell membrane. It catalyses the reaction ATP + H2O + 4 H(+)(in) = ADP + phosphate + 5 H(+)(out). Its function is as follows. Produces ATP from ADP in the presence of a proton gradient across the membrane. The alpha chain is a regulatory subunit. In Desulforudis audaxviator (strain MP104C), this protein is ATP synthase subunit alpha.